The chain runs to 138 residues: Small ribosomal subunit protein uS11c (138 aa).

Residues 1–24 are disordered; the sequence is MTKPIPRIGSRKNGRISSRKNGRR. The span at 9–24 shows a compositional bias: basic residues; sequence GSRKNGRISSRKNGRR.

Belongs to the universal ribosomal protein uS11 family. As to quaternary structure, part of the 30S ribosomal subunit.

Its subcellular location is the plastid. It localises to the chloroplast. The chain is Small ribosomal subunit protein uS11c from Chloranthus spicatus (Chulantree).